Reading from the N-terminus, the 348-residue chain is Erythronate-4-phosphate dehydrogenase (348 aa).

Substrate-binding residues include Thr-46 and Thr-67. Asp-147 contacts NAD(+). Arg-209 is an active-site residue. Asp-233 is an NAD(+) binding site. The active site involves Glu-238. The active-site Proton donor is the His-255. Gly-258 is a binding site for NAD(+). Tyr-259 is a substrate binding site.

Belongs to the D-isomer specific 2-hydroxyacid dehydrogenase family. PdxB subfamily. In terms of assembly, homodimer.

It localises to the cytoplasm. It carries out the reaction 4-phospho-D-erythronate + NAD(+) = (R)-3-hydroxy-2-oxo-4-phosphooxybutanoate + NADH + H(+). Its pathway is cofactor biosynthesis; pyridoxine 5'-phosphate biosynthesis; pyridoxine 5'-phosphate from D-erythrose 4-phosphate: step 2/5. In terms of biological role, catalyzes the oxidation of erythronate-4-phosphate to 3-hydroxy-2-oxo-4-phosphonooxybutanoate. This is Erythronate-4-phosphate dehydrogenase from Bacteroides fragilis (strain ATCC 25285 / DSM 2151 / CCUG 4856 / JCM 11019 / LMG 10263 / NCTC 9343 / Onslow / VPI 2553 / EN-2).